Reading from the N-terminus, the 1033-residue chain is Phospholipid-transporting ATPase neo1 (1033 aa).

Transmembrane regions (helical) follow at residues 133-153, 274-294, 317-337, and 344-364; these read LKIGYLSTYIAPLIFVLLITL, TLWANTVLASDGVYGVVVYTG, INFYSKILCTFVLVLSIGLTF, and DWYISVFRYLILFSSIIPINL. The 4-aspartylphosphate intermediate role is filled by Asp-408. Residues Asp-408, Lys-409, Thr-410, Glu-491, Phe-528, Ser-530, Lys-533, Lys-551, Arg-580, Thr-581, Thr-662, Gly-663, Asp-664, Arg-744, and Lys-750 each coordinate ATP. Residue Asp-408 coordinates Mg(2+). Residue Thr-410 participates in Mg(2+) binding. Transmembrane regions (helical) follow at residues 768–788, 843–863, 913–933, 939–959, 965–985, and 992–1012; these read IGDGGNDVGMIQVANVGIGIV, VVYSVISAFEPIALFQGLLLV, VLISVYQGLIIQLFTFYLIGF, MLAVCFSCLIFNELIMVALQI, TIVMSELLTLMMYILSVPFLT, and FLLGLKFYWVSALILFISLLP. A Mg(2+)-binding site is contributed by Asp-770. ATP is bound by residues Asn-773 and Asp-774. Asp-774 lines the Mg(2+) pocket.

Belongs to the cation transport ATPase (P-type) (TC 3.A.3) family. Type IV subfamily. As to quaternary structure, functions without a CDC50/LEM3 family accessory subunit. It depends on Mg(2+) as a cofactor.

The protein resides in the endosome membrane. The protein localises to the golgi apparatus membrane. The enzyme catalyses ATP + H2O + phospholipidSide 1 = ADP + phosphate + phospholipidSide 2.. The catalysed reaction is a 1,2-diacyl-sn-glycero-3-phospho-L-serine(out) + ATP + H2O = a 1,2-diacyl-sn-glycero-3-phospho-L-serine(in) + ADP + phosphate + H(+). It carries out the reaction a 1,2-diacyl-sn-glycero-3-phosphoethanolamine(out) + ATP + H2O = a 1,2-diacyl-sn-glycero-3-phosphoethanolamine(in) + ADP + phosphate + H(+). Its function is as follows. Flippase that catalyzes the hydrolysis of ATP coupled to the transport of lysophosphatidylserine, phosphatidylethanolamine, and phosphatidylserine from the lumenal to the cytosolic leaflet of the Golgi apparatus membrane and ensures the maintenance of asymmetric distribution of phospholipids. The protein is Phospholipid-transporting ATPase neo1 of Schizosaccharomyces pombe (strain 972 / ATCC 24843) (Fission yeast).